Reading from the N-terminus, the 165-residue chain is Large ribosomal subunit protein uL10 (165 aa).

It belongs to the universal ribosomal protein uL10 family. As to quaternary structure, part of the ribosomal stalk of the 50S ribosomal subunit. The N-terminus interacts with L11 and the large rRNA to form the base of the stalk. The C-terminus forms an elongated spine to which L12 dimers bind in a sequential fashion forming a multimeric L10(L12)X complex.

In terms of biological role, forms part of the ribosomal stalk, playing a central role in the interaction of the ribosome with GTP-bound translation factors. This is Large ribosomal subunit protein uL10 from Burkholderia multivorans (strain ATCC 17616 / 249).